The chain runs to 369 residues: Peptide chain release factor 2 (369 aa).

Gln251 carries the N5-methylglutamine modification.

The protein belongs to the prokaryotic/mitochondrial release factor family. In terms of processing, methylated by PrmC. Methylation increases the termination efficiency of RF2.

Its subcellular location is the cytoplasm. Functionally, peptide chain release factor 2 directs the termination of translation in response to the peptide chain termination codons UGA and UAA. The protein is Peptide chain release factor 2 of Campylobacter fetus subsp. fetus (strain 82-40).